The chain runs to 246 residues: 1-(5-phosphoribosyl)-5-[(5-phosphoribosylamino)methylideneamino] imidazole-4-carboxamide isomerase (246 aa).

Asp8 acts as the Proton acceptor in catalysis. The active-site Proton donor is Asp131.

Belongs to the HisA/HisF family.

The protein resides in the cytoplasm. It catalyses the reaction 1-(5-phospho-beta-D-ribosyl)-5-[(5-phospho-beta-D-ribosylamino)methylideneamino]imidazole-4-carboxamide = 5-[(5-phospho-1-deoxy-D-ribulos-1-ylimino)methylamino]-1-(5-phospho-beta-D-ribosyl)imidazole-4-carboxamide. Its pathway is amino-acid biosynthesis; L-histidine biosynthesis; L-histidine from 5-phospho-alpha-D-ribose 1-diphosphate: step 4/9. The chain is 1-(5-phosphoribosyl)-5-[(5-phosphoribosylamino)methylideneamino] imidazole-4-carboxamide isomerase from Delftia acidovorans (strain DSM 14801 / SPH-1).